A 227-amino-acid chain; its full sequence is Esterase OVCA2 (227 aa).

Residues Gly44–Glu68 form a disordered region. Active-site charge relay system residues include Ser119, Asp179, and His206.

The protein belongs to the LovG family. Proteolytically degraded in response to RA and 4HPR treatment in a time- and dose-dependent manner in the promyelocytic leukemia cell line HL-60. Ubiquitously expressed.

The catalysed reaction is a carboxylic ester + H2O = an alcohol + a carboxylate + H(+). Exhibits ester hydrolase activity with a strong preference for long-chain alkyl ester substrates and high selectivity against a variety of short, branched, and substituted esters. Is able to hydrolyze ester bonds within a wide range of p-nitrophenyl derivatives (C2-C14) in vitro, with a strong preference toward substrates of &gt;8 carbons. This Homo sapiens (Human) protein is Esterase OVCA2.